Consider the following 604-residue polypeptide: Protein TAX4 (604 aa).

5 disordered regions span residues 38–77 (HPNGNAGSAERPRHLKVESAPVVKSEPSLPRMRQPEPRSI), 132–249 (SFSN…RQQE), 267–299 (GTLPDLIPRSQRKTSKPRFKHRLLRSPEQQQEN), 338–380 (DETF…KGLK), and 394–428 (PFPHHHHHHHQLHNPNSHHLHTHHHTSSHKFNEDK). The span at 176 to 185 (YDNNVRSRSI) shows a compositional bias: polar residues. Low complexity-rich tracts occupy residues 186-203 (SPQVSYSTSLSSSCSISS) and 224-240 (SMSSYSLASKASAKASL). 3 stretches are compositionally biased toward basic residues: residues 276–290 (SQRKTSKPRFKHRLL), 366–379 (KKKKSRRSKIKKGL), and 396–421 (PHHHHHHHQLHNPNSHHLHTHHHTSS). The EH domain maps to 469–559 (ANEDDESHLQ…RVWNSVDGYV (91 aa)).

Belongs to the IRS4 family. As to quaternary structure, interacts with INP51.

With IRS4, acts as a positive regulator of INP51 activity and phosphatidylinositol 4,5-bisphosphate turnover. Negatively regulates signaling through the cell integrity pathway, including the MAP kinase SLT2. The sequence is that of Protein TAX4 (TAX4) from Saccharomyces cerevisiae (strain ATCC 204508 / S288c) (Baker's yeast).